The primary structure comprises 198 residues: Holliday junction branch migration complex subunit RuvA (198 aa).

A domain I region spans residues 1 to 63 (MYDYIKGQLT…EDAHLLFGFH (63 aa)). Residues 64 to 142 (TKDEKDVFLK…EAPQETGNTK (79 aa)) are domain II. Positions 143–147 (ARSNK) are flexible linker. A domain III region spans residues 148–198 (AGNTQLDEAIEALLALGYKATELKKIRAFFEGTSETAEQYIKSALKLLMKG).

This sequence belongs to the RuvA family. As to quaternary structure, homotetramer. Forms an RuvA(8)-RuvB(12)-Holliday junction (HJ) complex. HJ DNA is sandwiched between 2 RuvA tetramers; dsDNA enters through RuvA and exits via RuvB. An RuvB hexamer assembles on each DNA strand where it exits the tetramer. Each RuvB hexamer is contacted by two RuvA subunits (via domain III) on 2 adjacent RuvB subunits; this complex drives branch migration. In the full resolvosome a probable DNA-RuvA(4)-RuvB(12)-RuvC(2) complex forms which resolves the HJ.

It localises to the cytoplasm. Its function is as follows. The RuvA-RuvB-RuvC complex processes Holliday junction (HJ) DNA during genetic recombination and DNA repair, while the RuvA-RuvB complex plays an important role in the rescue of blocked DNA replication forks via replication fork reversal (RFR). RuvA specifically binds to HJ cruciform DNA, conferring on it an open structure. The RuvB hexamer acts as an ATP-dependent pump, pulling dsDNA into and through the RuvAB complex. HJ branch migration allows RuvC to scan DNA until it finds its consensus sequence, where it cleaves and resolves the cruciform DNA. The chain is Holliday junction branch migration complex subunit RuvA from Streptococcus pyogenes serotype M18 (strain MGAS8232).